We begin with the raw amino-acid sequence, 49 residues long: Large ribosomal subunit protein bL33A (49 aa).

Belongs to the bacterial ribosomal protein bL33 family.

The chain is Large ribosomal subunit protein bL33A from Latilactobacillus sakei subsp. sakei (strain 23K) (Lactobacillus sakei subsp. sakei).